The chain runs to 172 residues: Large ribosomal subunit protein uL10 (172 aa).

This sequence belongs to the universal ribosomal protein uL10 family. In terms of assembly, part of the ribosomal stalk of the 50S ribosomal subunit. The N-terminus interacts with L11 and the large rRNA to form the base of the stalk. The C-terminus forms an elongated spine to which L12 dimers bind in a sequential fashion forming a multimeric L10(L12)X complex.

Functionally, forms part of the ribosomal stalk, playing a central role in the interaction of the ribosome with GTP-bound translation factors. The protein is Large ribosomal subunit protein uL10 of Brucella anthropi (strain ATCC 49188 / DSM 6882 / CCUG 24695 / JCM 21032 / LMG 3331 / NBRC 15819 / NCTC 12168 / Alc 37) (Ochrobactrum anthropi).